The chain runs to 194 residues: Probable GTP-binding protein EngB (194 aa).

The EngB-type G domain occupies 22–194 (DLPEYALAGR…AWQFIKEGME (173 aa)). GTP is bound by residues 30–37 (GRSNVGKS), 57–61 (GKTQT), 75–78 (DVPG), 142–145 (TKAD), and 174–176 (FSS). Mg(2+) contacts are provided by Ser-37 and Thr-59.

The protein belongs to the TRAFAC class TrmE-Era-EngA-EngB-Septin-like GTPase superfamily. EngB GTPase family. Mg(2+) is required as a cofactor.

Functionally, necessary for normal cell division and for the maintenance of normal septation. The protein is Probable GTP-binding protein EngB of Listeria innocua serovar 6a (strain ATCC BAA-680 / CLIP 11262).